Here is a 172-residue protein sequence, read N- to C-terminus: MVKFLLLALALGVSCAHYQNLEVSPSEVDGKWYSLYIAADNKEKVSEGGPLRAYIKNVECIDECQTLKITFYTKVEGVCQEHTIVGRKGEDGKYITDFSGQNYFHIVEKSDDTMTFHNVNVDDSGKTNVILVVGRGESSSIEQKQRFEKTAEEYDIPKENIEDLVPTDNCDQ.

The first 16 residues, 1–16 (MVKFLLLALALGVSCA), serve as a signal peptide directing secretion. 2 disulfides stabilise this stretch: Cys60-Cys64 and Cys79-Cys170.

This sequence belongs to the calycin superfamily. Lipocalin family. As to expression, expressed in the lacrimal gland from where it is secreted into tears (at protein level).

The protein resides in the secreted. This chain is Female-specific lacrimal gland protein, found in Mesocricetus auratus (Golden hamster).